We begin with the raw amino-acid sequence, 198 residues long: MFAVLKTGGKQYKVQAGDMLRVEKLAADAGETVQFNDVLMIGGDAPVVGAPFVSGAAVQAEVVEQIKGDKVIKFVKRRRKHSSKRTVGHRQKLTLVKITEILASGADASGVKAATGKGEAAPAAKAAPKAKAAAPAAAGSDDLTQLTGVGPAAAKKLEAAGLTTFAQIAALSEDDIAGIDAIKIKPEWVEQAKELAQG.

Belongs to the bacterial ribosomal protein bL21 family. Part of the 50S ribosomal subunit. Contacts protein L20.

In terms of biological role, this protein binds to 23S rRNA in the presence of protein L20. The polypeptide is Large ribosomal subunit protein bL21 (Ruegeria sp. (strain TM1040) (Silicibacter sp.)).